Reading from the N-terminus, the 665-residue chain is Macrolide export ATP-binding/permease protein MacB (665 aa).

The region spanning 17–255 (MQVKGLIREF…AAQPASIIDK (239 aa)) is the ABC transporter domain. 53–60 (GQSGSGKS) is an ATP binding site. 4 helical membrane-spanning segments follow: residues 287 to 307 (LLTM…VGLG), 544 to 564 (IAII…LVSV), 588 to 608 (FLIE…GLAF), and 630 to 650 (SIIA…FLPA).

Belongs to the ABC transporter superfamily. Macrolide exporter (TC 3.A.1.122) family. As to quaternary structure, homodimer. Part of the tripartite efflux system MacAB-TolC, which is composed of an inner membrane transporter, MacB, a periplasmic membrane fusion protein, MacA, and an outer membrane component, TolC. The complex forms a large protein conduit and can translocate molecules across both the inner and outer membranes. Interacts with MacA.

It localises to the cell inner membrane. Its function is as follows. Part of the tripartite efflux system MacAB-TolC. MacB is a non-canonical ABC transporter that contains transmembrane domains (TMD), which form a pore in the inner membrane, and an ATP-binding domain (NBD), which is responsible for energy generation. Confers resistance against macrolides. This is Macrolide export ATP-binding/permease protein MacB from Psychrobacter cryohalolentis (strain ATCC BAA-1226 / DSM 17306 / VKM B-2378 / K5).